Consider the following 102-residue polypeptide: ATP-dependent Clp protease adapter protein ClpS (102 aa).

It belongs to the ClpS family. Binds to the N-terminal domain of the chaperone ClpA.

Involved in the modulation of the specificity of the ClpAP-mediated ATP-dependent protein degradation. In Shewanella loihica (strain ATCC BAA-1088 / PV-4), this protein is ATP-dependent Clp protease adapter protein ClpS.